Reading from the N-terminus, the 20-residue chain is Agglutinin beta-3 chain (20 aa).

The tract at residues 1-20 (GPNGKSQSIIVGPWGDRVTN) is disordered.

The protein belongs to the jacalin lectin family. In terms of assembly, formed of four alpha chains and four beta chains.

Functionally, D-galactose-specific lectin, binds the T-antigen structure Gal-beta1,3-GalNAc. The sequence is that of Agglutinin beta-3 chain from Maclura pomifera (Osage orange).